We begin with the raw amino-acid sequence, 220 residues long: Coat protein TP4 (220 aa).

It localises to the virion. The chain is Coat protein TP4 from Thermoproteus tenax (TTV1).